Consider the following 64-residue polypeptide: uncharacterized protein (64 aa).

Residues 1-14 (MFNFDPTDQPTDQH) show a composition bias toward polar residues. Residues 1 to 42 (MFNFDPTDQPTDQHLLQLPTDPHPLQQPIDPHPPPQPNNNLP) form a disordered region.

This is an uncharacterized protein from Dictyostelium discoideum (Social amoeba).